Reading from the N-terminus, the 191-residue chain is GDP-mannose pyrophosphatase (191 aa).

GDP-alpha-D-mannose is bound by residues tyrosine 17, 38 to 40 (KRE), arginine 67, and 85 to 87 (AGL). In terms of domain architecture, Nudix hydrolase spans 43-180 (DRGNGATILL…EIRDGKTVLL (138 aa)). The Mg(2+) site is built by alanine 85, glutamate 100, and glutamate 104. Residues 86–106 (GLLDNDEPEVCIRKEAIEETG) carry the Nudix box motif. GDP-alpha-D-mannose contacts are provided by residues glutamate 104, glutamate 127, 150–151 (DE), and lysine 176. Glutamate 151 is a binding site for Mg(2+).

The protein belongs to the Nudix hydrolase family. NudK subfamily. As to quaternary structure, homodimer. The cofactor is Mg(2+).

It carries out the reaction GDP-alpha-D-mannose + H2O = alpha-D-mannose 1-phosphate + GMP + 2 H(+). Its function is as follows. Nucleoside diphosphate sugar hydrolase that hydrolyzes GDP-mannose as its preferred substrate, yielding GMP and mannose-1-phosphate. The polypeptide is GDP-mannose pyrophosphatase (nudK) (Salmonella typhi).